Reading from the N-terminus, the 431-residue chain is Adenylosuccinate synthetase (431 aa).

GTP is bound by residues 12-18 (GDEGKGK) and 40-42 (GHT). The active-site Proton acceptor is D13. Mg(2+) contacts are provided by D13 and G40. IMP is bound by residues 13 to 16 (DEGK), 38 to 41 (NAGH), T131, R145, Q225, T240, and R304. H41 functions as the Proton donor in the catalytic mechanism. 300–306 (VNTGRPR) contacts substrate. Residues R306, 332 to 334 (KLD), and 414 to 416 (STS) each bind GTP.

It belongs to the adenylosuccinate synthetase family. In terms of assembly, homodimer. The cofactor is Mg(2+).

It is found in the cytoplasm. It catalyses the reaction IMP + L-aspartate + GTP = N(6)-(1,2-dicarboxyethyl)-AMP + GDP + phosphate + 2 H(+). It participates in purine metabolism; AMP biosynthesis via de novo pathway; AMP from IMP: step 1/2. In terms of biological role, plays an important role in the de novo pathway of purine nucleotide biosynthesis. Catalyzes the first committed step in the biosynthesis of AMP from IMP. The polypeptide is Adenylosuccinate synthetase (Rhizobium rhizogenes (strain K84 / ATCC BAA-868) (Agrobacterium radiobacter)).